The following is an 89-amino-acid chain: Large ribosomal subunit protein bL27 (89 aa).

Positions 1–22 (MAHKKAGGSSRNGRDSESKRLG) are disordered.

This sequence belongs to the bacterial ribosomal protein bL27 family.

This Bartonella tribocorum (strain CIP 105476 / IBS 506) protein is Large ribosomal subunit protein bL27.